The following is a 284-amino-acid chain: uncharacterized protein (284 aa).

An N-terminal signal peptide occupies residues 1–24 (MLYSRESRTTVLFLALVTSLTVLC). Residues 25–84 (HSVDVTTVFTTSTITEITTVTAAPQPQNKAETALNTATNIIQTMQFLFNCAPFKWKGPLK) lie on the Cytoplasmic side of the membrane. Residues 85 to 104 (ITSCALNFIVLLLTAWGYLL) traverse the membrane as a helical segment. Residues 105–284 (KYLQENKLNS…SVHMYSSSLL (180 aa)) lie on the Extracellular side of the membrane. N-linked (GlcNAc...) asparagine glycosylation occurs at Asn-270.

This sequence to yeast YNL033w.

The protein localises to the cell membrane. This is an uncharacterized protein from Saccharomyces cerevisiae (strain ATCC 204508 / S288c) (Baker's yeast).